The sequence spans 639 residues: Threonine--tRNA ligase (639 aa).

Positions 1–62 (MYQLTLPDKS…ETDANIEVLT (62 aa)) constitute a TGS domain. The tract at residues 246-537 (DHRKIGKELD…LIEHYEGKFP (292 aa)) is catalytic. Zn(2+) is bound by residues cysteine 337, histidine 388, and histidine 514.

This sequence belongs to the class-II aminoacyl-tRNA synthetase family. As to quaternary structure, homodimer. The cofactor is Zn(2+).

It is found in the cytoplasm. The catalysed reaction is tRNA(Thr) + L-threonine + ATP = L-threonyl-tRNA(Thr) + AMP + diphosphate + H(+). In terms of biological role, catalyzes the attachment of threonine to tRNA(Thr) in a two-step reaction: L-threonine is first activated by ATP to form Thr-AMP and then transferred to the acceptor end of tRNA(Thr). Also edits incorrectly charged L-seryl-tRNA(Thr). This Leptospira borgpetersenii serovar Hardjo-bovis (strain JB197) protein is Threonine--tRNA ligase.